The following is a 369-amino-acid chain: DNA replication and repair protein RecF (369 aa).

30-37 (GDNAQGKT) contributes to the ATP binding site.

This sequence belongs to the RecF family.

The protein resides in the cytoplasm. In terms of biological role, the RecF protein is involved in DNA metabolism; it is required for DNA replication and normal SOS inducibility. RecF binds preferentially to single-stranded, linear DNA. It also seems to bind ATP. In Streptococcus equi subsp. zooepidemicus (strain H70), this protein is DNA replication and repair protein RecF.